A 386-amino-acid polypeptide reads, in one-letter code: 8-amino-7-oxononanoate synthase (386 aa).

Residues arginine 22 and arginine 29 each coordinate substrate. 109–110 (GY) lines the pyridoxal 5'-phosphate pocket. Histidine 134 is a substrate binding site. Pyridoxal 5'-phosphate-binding positions include serine 182, 207–210 (DDAH), and 237–240 (TLSK). Lysine 240 carries the N6-(pyridoxal phosphate)lysine modification. Threonine 349 contacts substrate.

It belongs to the class-II pyridoxal-phosphate-dependent aminotransferase family. BioF subfamily. Homodimer. It depends on pyridoxal 5'-phosphate as a cofactor.

The enzyme catalyses 6-carboxyhexanoyl-[ACP] + L-alanine + H(+) = (8S)-8-amino-7-oxononanoate + holo-[ACP] + CO2. Its pathway is cofactor biosynthesis; biotin biosynthesis. Functionally, catalyzes the decarboxylative condensation of pimeloyl-[acyl-carrier protein] and L-alanine to produce 8-amino-7-oxononanoate (AON), [acyl-carrier protein], and carbon dioxide. The polypeptide is 8-amino-7-oxononanoate synthase (Beijerinckia indica subsp. indica (strain ATCC 9039 / DSM 1715 / NCIMB 8712)).